Consider the following 1060-residue polypeptide: Protein FAM184B (1060 aa).

Polar residues predominate over residues 1-17; sequence MASALNSKINPPGTCQG. Residues 1-24 form a disordered region; the sequence is MASALNSKINPPGTCQGSKADGGA. Positions 51 to 159 form a coiled coil; it reads ALNTRQDEAE…EMLELKADYE (109 aa). The segment at 165–191 is disordered; sequence LTSHEATPQGRLPQESPETKSEPGQGP. Coiled coils occupy residues 192-333 and 402-502; these read EMQE…DRMM and MKQQ…RLEE. Disordered regions lie at residues 532 to 566, 681 to 700, and 762 to 803; these read QDPCLKLDETSPRGEEYQDKLAAEEGTSSDEEERT, TEERLKKESSHSLQIQHQTH, and GRQQ…GSGE. Basic and acidic residues-rich tracts occupy residues 536-554, 681-690, and 773-785; these read LKLDETSPRGEEYQDKLAA, TEERLKKESS, and DSKDHIIATEERG. Positions 584-769 form a coiled coil; the sequence is LKEKTSKIQR…ALGRQQASSQ (186 aa). A coiled-coil region spans residues 806-934; it reads GLWEENAQLQ…KQLTEERRFH (129 aa). 2 stretches are compositionally biased toward polar residues: residues 994-1009 and 1018-1030; these read SRINAPPITTSPSLDP and KPNQSTDAKTATR. A disordered region spans residues 994–1050; it reads SRINAPPITTSPSLDPSPSCGRTYKPNQSTDAKTATRTPDGETAQAKEVQQKQGSPH.

This sequence belongs to the FAM184 family.

The sequence is that of Protein FAM184B (FAM184B) from Homo sapiens (Human).